Consider the following 339-residue polypeptide: Anthranilate phosphoribosyltransferase (339 aa).

5-phospho-alpha-D-ribose 1-diphosphate is bound by residues glycine 79, 82–83 (GD), serine 87, 89–92 (NIST), 107–115 (KHGNRSISS), and serine 119. Position 79 (glycine 79) interacts with anthranilate. Position 91 (serine 91) interacts with Mg(2+). Asparagine 110 lines the anthranilate pocket. Position 165 (arginine 165) interacts with anthranilate. 2 residues coordinate Mg(2+): aspartate 224 and glutamate 225.

Belongs to the anthranilate phosphoribosyltransferase family. In terms of assembly, homodimer. It depends on Mg(2+) as a cofactor.

The catalysed reaction is N-(5-phospho-beta-D-ribosyl)anthranilate + diphosphate = 5-phospho-alpha-D-ribose 1-diphosphate + anthranilate. It functions in the pathway amino-acid biosynthesis; L-tryptophan biosynthesis; L-tryptophan from chorismate: step 2/5. Its function is as follows. Catalyzes the transfer of the phosphoribosyl group of 5-phosphorylribose-1-pyrophosphate (PRPP) to anthranilate to yield N-(5'-phosphoribosyl)-anthranilate (PRA). The sequence is that of Anthranilate phosphoribosyltransferase from Listeria monocytogenes serotype 4b (strain CLIP80459).